Reading from the N-terminus, the 87-residue chain is Large ribosomal subunit protein bL27 (87 aa).

It belongs to the bacterial ribosomal protein bL27 family.

The protein is Large ribosomal subunit protein bL27 of Stenotrophomonas maltophilia (strain K279a).